Reading from the N-terminus, the 1271-residue chain is Clustered mitochondria protein homolog (1271 aa).

TPR repeat units lie at residues 104 to 138 (RHKP…ELGE) and 502 to 535 (CYGL…KPHK). Positions 329–580 (DQSRPQLSIL…RSTPLDIDFI (252 aa)) constitute a Clu domain. The segment covering 729-763 (QEEKSKIEDNEKAIEEEKKEEKTEKKEEKEEKADE) has biased composition (basic and acidic residues). Residues 729–783 (QEEKSKIEDNEKAIEEEKKEEKTEKKEEKEEKADEEKSENEEDKTKPEEPSKGVF) form a disordered region. 3 TPR repeats span residues 1067-1100 (ISSY…WDFV), 1109-1142 (VTTL…SEKI), and 1151-1184 (AMIH…FSRH). A disordered region spans residues 1212–1271 (QAKDKNKPKKVKAPPVPPQATTKKSKNKSKMAQTQISKLHLNSSTRFSSSSRVKPRLKKK). A compositionally biased stretch (polar residues) spans 1241–1253 (KMAQTQISKLHLN). A compositionally biased stretch (low complexity) spans 1254–1263 (SSTRFSSSSR).

Belongs to the CLU family. May associate with the eukaryotic translation initiation factor 3 (eIF-3) complex.

It is found in the cytoplasm. In terms of biological role, mRNA-binding protein involved in proper cytoplasmic distribution of mitochondria. This Meyerozyma guilliermondii (strain ATCC 6260 / CBS 566 / DSM 6381 / JCM 1539 / NBRC 10279 / NRRL Y-324) (Yeast) protein is Clustered mitochondria protein homolog.